The chain runs to 368 residues: Ferrochelatase (368 aa).

The Fe cation site is built by H209 and E290. Residues 347–368 are disordered; it reads REEQEQQAHISREEARRLGADQ.

Belongs to the ferrochelatase family.

Its subcellular location is the cytoplasm. It carries out the reaction heme b + 2 H(+) = protoporphyrin IX + Fe(2+). Its pathway is porphyrin-containing compound metabolism; protoheme biosynthesis; protoheme from protoporphyrin-IX: step 1/1. In terms of biological role, catalyzes the ferrous insertion into protoporphyrin IX. In Janthinobacterium sp. (strain Marseille) (Minibacterium massiliensis), this protein is Ferrochelatase.